Reading from the N-terminus, the 55-residue chain is Potassium channel toxin alpha-KTx 17.1 (55 aa).

The N-terminal stretch at 1-23 is a signal peptide; it reads MKFIIVLILISVLIATIVPVNEA. Gln-24 carries the pyrrolidone carboxylic acid modification. Intrachain disulfides connect Cys-27–Cys-43, Cys-33–Cys-48, and Cys-37–Cys-50. Threonine amide is present on Thr-53.

It belongs to the short scorpion toxin superfamily. Potassium channel inhibitor family. Alpha-KTx 17 subfamily. As to expression, expressed by the venom gland.

It localises to the secreted. In terms of biological role, blocker of potassium channels, which inhibits both the delayed rectifier and fast transient potassium current. The inhibition is reversible and voltage-independent. It causes a depolarizing shift of the steady-state activation curve of the currents, without changing their steady-state inactivation behavior. This Olivierus martensii (Manchurian scorpion) protein is Potassium channel toxin alpha-KTx 17.1.